The primary structure comprises 120 residues: Non-specific lipid-transfer protein (120 aa).

Residues 1-26 (MASSMSLKLACVVVLCMVVGAPLAQG) form the signal peptide. 3 disulfide bridges follow: cysteine 40-cysteine 56, cysteine 57-cysteine 102, and cysteine 77-cysteine 116.

It belongs to the plant LTP family.

Its function is as follows. Plant non-specific lipid-transfer proteins transfer phospholipids as well as galactolipids across membranes. May play a role in wax or cutin deposition in the cell walls of expanding epidermal cells and certain secretory tissues. The protein is Non-specific lipid-transfer protein of Gossypium hirsutum (Upland cotton).